The following is a 483-amino-acid chain: Glutamyl-tRNA(Gln) amidotransferase subunit A (483 aa).

Catalysis depends on charge relay system residues lysine 76 and serine 151. Serine 175 (acyl-ester intermediate) is an active-site residue.

This sequence belongs to the amidase family. GatA subfamily. As to quaternary structure, heterotrimer of A, B and C subunits.

The enzyme catalyses L-glutamyl-tRNA(Gln) + L-glutamine + ATP + H2O = L-glutaminyl-tRNA(Gln) + L-glutamate + ADP + phosphate + H(+). Functionally, allows the formation of correctly charged Gln-tRNA(Gln) through the transamidation of misacylated Glu-tRNA(Gln) in organisms which lack glutaminyl-tRNA synthetase. The reaction takes place in the presence of glutamine and ATP through an activated gamma-phospho-Glu-tRNA(Gln). This is Glutamyl-tRNA(Gln) amidotransferase subunit A from Pseudomonas fluorescens (strain SBW25).